The chain runs to 699 residues: Sarcoplasmic reticulum histidine-rich calcium-binding protein (699 aa).

Positions 1 to 28 (MGHHRPWLHASVLWAGVASLLLPPAMTQ) are cleaved as a signal peptide. A disordered region spans residues 50–95 (SEEASAELRHHLHSPRDHPDENKDVSTENGHHFWSHPDREKEDEDV). Over residues 55–89 (AELRHHLHSPRDHPDENKDVSTENGHHFWSHPDRE) the composition is skewed to basic and acidic residues. Position 76 is a phosphothreonine; by FAM20C (T76). Tandem repeats lie at residues 106–121 (HRSQDHKVGDEGVSGE), 134–154 (HRGHGSEDTEDSAEHRHHLPS), 155–177 (HRSHSHQDEDEDEVVSSEHHHHI), 180–213 (HGHRGHDGEDDEGEEEEEEEEEEEEASTEYGHQA), 214–237 (HRHRGHGSEEDEDVSDGHHHHGPS), 238–270 (HRHQGHEEDDDDDDDDDDDDDDDDVSIEYRHQA), 271–294 (HRHQGHGIEEDEDVSDGHHHRDPS), 295–318 (HRHRSHEEDDNDDDDVSTEYGHQA), 319–342 (HRHQDHRKEEVEAVSGEHHHHVPD), and 343–365 (HRHQGHRDEEEDEDVSTERWHQG). Residues 106–342 (HRSQDHKVGD…SGEHHHHVPD (237 aa)) form a 6 X approximate tandem repeats region. Positions 106–365 (HRSQDHKVGD…DVSTERWHQG (260 aa)) are 4 X tandem repeats, acidic. S119 and S145 each carry phosphoserine; by FAM20C. The tract at residues 127-617 (HGGQARGHRG…EDTGPQDAQE (491 aa)) is disordered. Basic residues-rich tracts occupy residues 148-158 (HRHHLPSHRSH) and 173-183 (HHHHILRHGHR). The span at 187–206 (GEDDEGEEEEEEEEEEEEAS) shows a compositional bias: acidic residues. Basic residues predominate over residues 231-241 (HHHHGPSHRHQ). A compositionally biased stretch (acidic residues) spans 244 to 263 (EEDDDDDDDDDDDDDDDDVS). Residues 288-298 (HHHRDPSHRHR) are compositionally biased toward basic residues. Residues 302–311 (EDDNDDDDVS) are compositionally biased toward acidic residues. Residues 324–335 (HRKEEVEAVSGE) are compositionally biased toward basic and acidic residues. At S333 the chain carries Phosphoserine. Residues 336 to 347 (HHHHVPDHRHQG) are compositionally biased toward basic residues. Phosphoserine; by FAM20C occurs at positions 358 and 431. 2 stretches are compositionally biased toward basic and acidic residues: residues 444–463 (SHQDEETGHGQRGSIKEMSH) and 470–481 (VVKDRSHLRKDD). A Phosphoserine; by FAM20C modification is found at S494. The span at 504–515 (QGEKGTHHGSRD) shows a compositional bias: basic and acidic residues. Acidic residues-rich tracts occupy residues 532-551 (QEEEEEEDKEEEEEEEDEER) and 567-581 (SEEEEEEEEGLEEDE). S567 carries the post-translational modification Phosphoserine; by FAM20C. The interval 627 to 673 (CGYCSFCNRCTECESCHCDEENMGEHCDQCQHCQFCYLCPLVCETVC) is metal-binding.

This sequence belongs to the HRC family.

It is found in the sarcoplasmic reticulum lumen. May play a role in the regulation of calcium sequestration or release in the SR of skeletal and cardiac muscle. The polypeptide is Sarcoplasmic reticulum histidine-rich calcium-binding protein (HRC) (Homo sapiens (Human)).